The following is a 184-amino-acid chain: MKNVTDSFLSLGHWSSAGSFGLNTDILATNPINLSVVLGVLIFFGKGVLSDLLDNRKQRILKTIQNSEELGVGAVEKLEKARSRLRKVKTEAEQFLVNGYSDIEREKFNLIKSTSNTLEQLENDKNETLRFEQQRLIYQVRQRFFQQALQRAIGTLNSCLNNELHLRTISANIGMLGTIKEITD.

Residues 27-49 (LATNPINLSVVLGVLIFFGKGVL) traverse the membrane as a helical segment.

It belongs to the ATPase B chain family. As to quaternary structure, F-type ATPases have 2 components, F(1) - the catalytic core - and F(0) - the membrane proton channel. F(1) has five subunits: alpha(3), beta(3), gamma(1), delta(1), epsilon(1). F(0) has four main subunits: a(1), b(1), b'(1) and c(10-14). The alpha and beta chains form an alternating ring which encloses part of the gamma chain. F(1) is attached to F(0) by a central stalk formed by the gamma and epsilon chains, while a peripheral stalk is formed by the delta, b and b' chains.

The protein localises to the plastid. The protein resides in the chloroplast thylakoid membrane. Its function is as follows. F(1)F(0) ATP synthase produces ATP from ADP in the presence of a proton or sodium gradient. F-type ATPases consist of two structural domains, F(1) containing the extramembraneous catalytic core and F(0) containing the membrane proton channel, linked together by a central stalk and a peripheral stalk. During catalysis, ATP synthesis in the catalytic domain of F(1) is coupled via a rotary mechanism of the central stalk subunits to proton translocation. Component of the F(0) channel, it forms part of the peripheral stalk, linking F(1) to F(0). In Cuscuta exaltata (Tall dodder), this protein is ATP synthase subunit b, chloroplastic.